A 385-amino-acid chain; its full sequence is Succinate--CoA ligase [ADP-forming] subunit beta (385 aa).

The region spanning 9-244 is the ATP-grasp domain; the sequence is KEVLRKYGVS…LDEEDPKEIE (236 aa). Residues lysine 46, 53–55, glutamate 99, cysteine 102, and glutamate 107 each bind ATP; that span reads GRG. The Mg(2+) site is built by asparagine 199 and aspartate 213. Residues asparagine 264 and 321–323 contribute to the substrate site; that span reads GIM.

It belongs to the succinate/malate CoA ligase beta subunit family. Heterotetramer of two alpha and two beta subunits. It depends on Mg(2+) as a cofactor.

The enzyme catalyses succinate + ATP + CoA = succinyl-CoA + ADP + phosphate. It catalyses the reaction GTP + succinate + CoA = succinyl-CoA + GDP + phosphate. It functions in the pathway carbohydrate metabolism; tricarboxylic acid cycle; succinate from succinyl-CoA (ligase route): step 1/1. Its function is as follows. Succinyl-CoA synthetase functions in the citric acid cycle (TCA), coupling the hydrolysis of succinyl-CoA to the synthesis of either ATP or GTP and thus represents the only step of substrate-level phosphorylation in the TCA. The beta subunit provides nucleotide specificity of the enzyme and binds the substrate succinate, while the binding sites for coenzyme A and phosphate are found in the alpha subunit. The polypeptide is Succinate--CoA ligase [ADP-forming] subunit beta (Bacillus velezensis (strain DSM 23117 / BGSC 10A6 / LMG 26770 / FZB42) (Bacillus amyloliquefaciens subsp. plantarum)).